The chain runs to 292 residues: uncharacterized protein (292 aa).

Residues Ser-44 and Tyr-106 each act as charge relay system in the active site. Tyr-132 (proton donor) is an active-site residue. Lys-161 acts as the Schiff-base intermediate with substrate in catalysis.

The protein belongs to the DapA family. As to quaternary structure, homotetramer.

It is found in the cytoplasm. This is an uncharacterized protein from Thermoplasma acidophilum (strain ATCC 25905 / DSM 1728 / JCM 9062 / NBRC 15155 / AMRC-C165).